The sequence spans 341 residues: Ribosomal RNA small subunit methyltransferase H (341 aa).

S-adenosyl-L-methionine is bound by residues 47 to 49 (GGY), Asp64, Phe91, Asp109, and Gln116.

Belongs to the methyltransferase superfamily. RsmH family.

It localises to the cytoplasm. It carries out the reaction cytidine(1402) in 16S rRNA + S-adenosyl-L-methionine = N(4)-methylcytidine(1402) in 16S rRNA + S-adenosyl-L-homocysteine + H(+). Specifically methylates the N4 position of cytidine in position 1402 (C1402) of 16S rRNA. This Rhizobium leguminosarum bv. trifolii (strain WSM2304) protein is Ribosomal RNA small subunit methyltransferase H.